A 496-amino-acid chain; its full sequence is Genome polyprotein (496 aa).

Residues 1–447 lie on the Extracellular side of the membrane; sequence SRCTHLENRD…HTVLGGAFNS (447 aa). Cystine bridges form between Cys3–Cys30, Cys60–Cys116, Cys60–Cys121, Cys74–Cys105, Cys92–Cys116, and Cys92–Cys121. The fusion peptide stretch occupies residues 98–111; it reads DRGWGNHCGLFGKG. A glycan (N-linked (GlcNAc...) asparagine; by host) is linked at Asn154. Intrachain disulfides connect Cys186/Cys290 and Cys307/Cys338. A helical transmembrane segment spans residues 448 to 468; the sequence is IFGGVGFLPKLLMGVALAWLG. Residues 469–479 lie on the Cytoplasmic side of the membrane; it reads LNTRNPTMSMS. Residues 480-496 form a helical membrane-spanning segment; sequence FLLAGGLVLAMTLGVGA.

Homodimer; in the endoplasmic reticulum and Golgi. In terms of processing, N-glycosylated.

It is found in the virion membrane. Its subcellular location is the host endoplasmic reticulum membrane. Functionally, binds to host cell surface receptor and mediates fusion between viral and cellular membranes. Envelope protein is synthesized in the endoplasmic reticulum in the form of heterodimer with protein prM. They play a role in virion budding in the ER, and the newly formed immature particle is covered with 60 spikes composed of heterodimer between precursor prM and envelope protein E. The virion is transported to the Golgi apparatus where the low pH causes dissociation of PrM-E heterodimers and formation of E homodimers. prM-E cleavage is ineficient, and many virions are only partially matured. These uncleaved prM would play a role in immune evasion. The protein is Genome polyprotein of Louping ill virus (strain Negishi 3248/49/P10) (Li).